A 264-amino-acid polypeptide reads, in one-letter code: Thymidylate synthase (264 aa).

DUMP is bound at residue Arg21. Residue His51 participates in (6R)-5,10-methylene-5,6,7,8-tetrahydrofolate binding. Residue 126–127 participates in dUMP binding; the sequence is RR. The active-site Nucleophile is Cys146. DUMP-binding positions include 166 to 169, Asn177, and 207 to 209; these read RSAD and HLY. Asp169 contributes to the (6R)-5,10-methylene-5,6,7,8-tetrahydrofolate binding site. A (6R)-5,10-methylene-5,6,7,8-tetrahydrofolate-binding site is contributed by Ser263.

Belongs to the thymidylate synthase family. Bacterial-type ThyA subfamily. As to quaternary structure, homodimer.

It localises to the cytoplasm. It catalyses the reaction dUMP + (6R)-5,10-methylene-5,6,7,8-tetrahydrofolate = 7,8-dihydrofolate + dTMP. The protein operates within pyrimidine metabolism; dTTP biosynthesis. Functionally, catalyzes the reductive methylation of 2'-deoxyuridine-5'-monophosphate (dUMP) to 2'-deoxythymidine-5'-monophosphate (dTMP) while utilizing 5,10-methylenetetrahydrofolate (mTHF) as the methyl donor and reductant in the reaction, yielding dihydrofolate (DHF) as a by-product. This enzymatic reaction provides an intracellular de novo source of dTMP, an essential precursor for DNA biosynthesis. The sequence is that of Thymidylate synthase from Neisseria gonorrhoeae (strain ATCC 700825 / FA 1090).